The sequence spans 269 residues: Hydroxyethylthiazole kinase (269 aa).

M42 provides a ligand contact to substrate. Residues R118 and S164 each coordinate ATP. G191 provides a ligand contact to substrate.

It belongs to the Thz kinase family. Mg(2+) is required as a cofactor.

It carries out the reaction 5-(2-hydroxyethyl)-4-methylthiazole + ATP = 4-methyl-5-(2-phosphooxyethyl)-thiazole + ADP + H(+). It participates in cofactor biosynthesis; thiamine diphosphate biosynthesis; 4-methyl-5-(2-phosphoethyl)-thiazole from 5-(2-hydroxyethyl)-4-methylthiazole: step 1/1. Its function is as follows. Catalyzes the phosphorylation of the hydroxyl group of 4-methyl-5-beta-hydroxyethylthiazole (THZ). The polypeptide is Hydroxyethylthiazole kinase (Listeria monocytogenes serovar 1/2a (strain ATCC BAA-679 / EGD-e)).